Reading from the N-terminus, the 635-residue chain is Probable extracellular metalloproteinase 1 (635 aa).

Residues 1-19 (MHGLLLAAGLLSLPLHVLA) form the signal peptide. Residues 20-246 (HPQPSTSTSL…VHNVVDYVAH (227 aa)) constitute a propeptide that is removed on maturation. The N-linked (GlcNAc...) asparagine glycan is linked to Asn287. Residue His430 participates in Zn(2+) binding. Glu431 is a catalytic residue. His434 is a binding site for Zn(2+). N-linked (GlcNAc...) asparagine glycosylation is found at Asn475, Asn594, and Asn623.

The protein belongs to the peptidase M36 family. Zn(2+) is required as a cofactor.

The protein localises to the secreted. In terms of biological role, secreted metalloproteinase probably acting as a virulence factor. In Trichophyton verrucosum (strain HKI 0517), this protein is Probable extracellular metalloproteinase 1 (MEP1).